The chain runs to 618 residues: DNA mismatch repair protein MutL (618 aa).

The interval 367-402 is disordered; it reads EPTTAREPATPRYSGGASGGNGGRQTAGGWPHAQPG. Gly residues predominate over residues 382-392; sequence GASGGNGGRQT.

The protein belongs to the DNA mismatch repair MutL/HexB family.

Its function is as follows. This protein is involved in the repair of mismatches in DNA. It is required for dam-dependent methyl-directed DNA mismatch repair. May act as a 'molecular matchmaker', a protein that promotes the formation of a stable complex between two or more DNA-binding proteins in an ATP-dependent manner without itself being part of a final effector complex. This is DNA mismatch repair protein MutL from Salmonella paratyphi A (strain ATCC 9150 / SARB42).